Reading from the N-terminus, the 2845-residue chain is Multiple epidermal growth factor-like domains protein 8 (2845 aa).

An N-terminal signal peptide occupies residues 1–27 (MALGKVLAMALVLALAVLGSLSPGARA). Topologically, residues 28 to 2647 (GDCKGQRQVL…FFRQDQAHID (2620 aa)) are extracellular. Disulfide bonds link cysteine 30–cysteine 57, cysteine 142–cysteine 152, cysteine 146–cysteine 158, cysteine 174–cysteine 184, cysteine 178–cysteine 191, and cysteine 193–cysteine 202. The 111-residue stretch at 30-140 (CKGQRQVLRE…LGFNASFRFS (111 aa)) folds into the CUB 1 domain. Asparagine 50 carries N-linked (GlcNAc...) asparagine glycosylation. EGF-like domains follow at residues 138 to 168 (RFSL…GGPD) and 170 to 203 (GLQE…RACD). Asparagine 217 carries an N-linked (GlcNAc...) asparagine glycan. Kelch repeat units lie at residues 241-287 (LLAV…AVAW), 290-338 (SLVL…AGHA), 346-399 (WLYV…FHAP), 402-453 (ALLV…FHTA), 459-511 (YMVV…APPS), and 525-575 (VLLV…SRDP). 3 PSI domains span residues 561-613 (YCSM…GDCQ), 847-899 (SCTS…TLCP), and 900-947 (LCEE…EECP). Residue asparagine 1048 is glycosylated (N-linked (GlcNAc...) asparagine). In terms of domain architecture, EGF-like 3; calcium-binding spans 1074-1115 (DVDECRLGLARCHPRATCLNTPLSYECHCQRGYQGDGISHCN). 16 disulfide bridges follow: cysteine 1078/cysteine 1091, cysteine 1085/cysteine 1100, cysteine 1102/cysteine 1114, cysteine 1163/cysteine 1171, cysteine 1165/cysteine 1179, cysteine 1182/cysteine 1191, cysteine 1194/cysteine 1208, cysteine 1211/cysteine 1224, cysteine 1213/cysteine 1231, cysteine 1233/cysteine 1242, cysteine 1245/cysteine 1259, cysteine 1263/cysteine 1302, cysteine 1336/cysteine 1367, cysteine 1407/cysteine 1421, cysteine 1415/cysteine 1433, and cysteine 1435/cysteine 1444. Laminin EGF-like domains are found at residues 1163–1210 (CGCS…GCRP) and 1211–1261 (CQCN…SCFR). In terms of domain architecture, CUB 2 spans 1263–1405 (CGGRALLTNV…WGFNASVGSA (143 aa)). An N-linked (GlcNAc...) asparagine glycan is attached at asparagine 1271. Phosphothreonine is present on threonine 1353. In terms of domain architecture, EGF-like 4 spans 1403–1445 (GSARCGSGGPGSCPVPQECVPQDGAAGAGLCRCPQGWAGPHCR). Kelch repeat units follow at residues 1522–1570 (TLWM…SFHA), 1580–1626 (AMYL…HTLT), 1632–1679 (SLLL…SAVY), 1685–1735 (SLYV…VRGS), 1796–1843 (TMVV…ESVA), and 1852–1898 (RLYI…CHGA). The interval 1726–1745 (RDRMRNVRGSSRGLGQVPGE) is disordered. PSI domains lie at 1876–1916 (PCRL…SPCS), 1924–1979 (ECRR…NDCR), 2060–2118 (PCHL…ESCS), and 2120–2177 (GCAQ…LSCP). An N-linked (GlcNAc...) asparagine glycan is attached at asparagine 2066. In terms of domain architecture, EGF-like 5 spans 2178-2216 (PEDECANGHHDCNETQNCHDQPHGYECSCKTGYTMDNMT). Disulfide bonds link cysteine 2182–cysteine 2195 and cysteine 2189–cysteine 2204. The N-linked (GlcNAc...) asparagine glycan is linked to asparagine 2229. Disulfide bonds link cysteine 2253–cysteine 2261, cysteine 2255–cysteine 2270, cysteine 2273–cysteine 2282, cysteine 2285–cysteine 2299, cysteine 2380–cysteine 2389, cysteine 2382–cysteine 2397, cysteine 2399–cysteine 2424, and cysteine 2427–cysteine 2441. 2 Laminin EGF-like domains span residues 2253 to 2301 (CRCN…TCRP) and 2380 to 2443 (CQCN…QCYR). Positions 2523–2564 (TVHIQPPPAPPPPPPPADGGPRGAGDPGGAGASSGPGAPAEP) are disordered. Positions 2527 to 2540 (QPPPAPPPPPPPAD) are enriched in pro residues. The span at 2542 to 2556 (GPRGAGDPGGAGASS) shows a compositional bias: gly residues. The helical transmembrane segment at 2648–2668 (LFVFFSVFFSCFFLFLSLCVL) threads the bilayer. The Cytoplasmic segment spans residues 2669 to 2845 (LWKAKQALDQ…SQDNLTSMSL (177 aa)). Positions 2817–2831 (GGGAGGSGHGTGAGR) are enriched in gly residues. The tract at residues 2817–2845 (GGGAGGSGHGTGAGRKGLLSQDNLTSMSL) is disordered. Polar residues predominate over residues 2836–2845 (SQDNLTSMSL).

It is found in the membrane. Acts as a negative regulator of hedgehog signaling. In Homo sapiens (Human), this protein is Multiple epidermal growth factor-like domains protein 8 (MEGF8).